Consider the following 226-residue polypeptide: Thiamine-phosphate synthase (226 aa).

4-amino-2-methyl-5-(diphosphooxymethyl)pyrimidine is bound by residues 46–50 (QFRDK) and aspartate 83. Aspartate 84 and aspartate 103 together coordinate Mg(2+). Serine 122 contributes to the 4-amino-2-methyl-5-(diphosphooxymethyl)pyrimidine binding site. 2-[(2R,5Z)-2-carboxy-4-methylthiazol-5(2H)-ylidene]ethyl phosphate is bound at residue 149–151 (TQS). Position 152 (lysine 152) interacts with 4-amino-2-methyl-5-(diphosphooxymethyl)pyrimidine. 2-[(2R,5Z)-2-carboxy-4-methylthiazol-5(2H)-ylidene]ethyl phosphate contacts are provided by residues glycine 181 and 201–202 (IT).

It belongs to the thiamine-phosphate synthase family. Mg(2+) is required as a cofactor.

The catalysed reaction is 2-[(2R,5Z)-2-carboxy-4-methylthiazol-5(2H)-ylidene]ethyl phosphate + 4-amino-2-methyl-5-(diphosphooxymethyl)pyrimidine + 2 H(+) = thiamine phosphate + CO2 + diphosphate. It carries out the reaction 2-(2-carboxy-4-methylthiazol-5-yl)ethyl phosphate + 4-amino-2-methyl-5-(diphosphooxymethyl)pyrimidine + 2 H(+) = thiamine phosphate + CO2 + diphosphate. It catalyses the reaction 4-methyl-5-(2-phosphooxyethyl)-thiazole + 4-amino-2-methyl-5-(diphosphooxymethyl)pyrimidine + H(+) = thiamine phosphate + diphosphate. Its pathway is cofactor biosynthesis; thiamine diphosphate biosynthesis; thiamine phosphate from 4-amino-2-methyl-5-diphosphomethylpyrimidine and 4-methyl-5-(2-phosphoethyl)-thiazole: step 1/1. Functionally, condenses 4-methyl-5-(beta-hydroxyethyl)thiazole monophosphate (THZ-P) and 2-methyl-4-amino-5-hydroxymethyl pyrimidine pyrophosphate (HMP-PP) to form thiamine monophosphate (TMP). The protein is Thiamine-phosphate synthase of Haemophilus influenzae (strain 86-028NP).